Reading from the N-terminus, the 717-residue chain is UvrABC system protein C (717 aa).

One can recognise a GIY-YIG domain in the interval 16–95; it reads DSPGVYKFRD…IKEFDPRFNV (80 aa). Residues 208-243 enclose the UVR domain; the sequence is GTYIRRLEKDMMQAAEEMEYERAARLRDDAEALKRA. The disordered stretch occupies residues 467 to 548; it reads ERTGEWEEAP…PREDDGRPKR (82 aa). Positions 477-522 are enriched in low complexity; sequence EAAPGSASVHASATGPAATGQATAGPAAMGQAAAGPVSTGPAATGP.

The protein belongs to the UvrC family. In terms of assembly, interacts with UvrB in an incision complex.

The protein localises to the cytoplasm. Its function is as follows. The UvrABC repair system catalyzes the recognition and processing of DNA lesions. UvrC both incises the 5' and 3' sides of the lesion. The N-terminal half is responsible for the 3' incision and the C-terminal half is responsible for the 5' incision. This is UvrABC system protein C from Streptomyces griseus subsp. griseus (strain JCM 4626 / CBS 651.72 / NBRC 13350 / KCC S-0626 / ISP 5235).